The chain runs to 194 residues: GTP cyclohydrolase-2 (194 aa).

47–51 (RVHSE) lines the GTP pocket. Zn(2+) is bound by residues Cys52, Cys63, and Cys65. GTP contacts are provided by residues Gln68, 90–92 (EGR), and Thr112. The active-site Proton acceptor is Asp124. Arg126 functions as the Nucleophile in the catalytic mechanism. GTP is bound by residues Thr147 and Lys152.

It belongs to the GTP cyclohydrolase II family. As to quaternary structure, homodimer. The cofactor is Zn(2+).

The catalysed reaction is GTP + 4 H2O = 2,5-diamino-6-hydroxy-4-(5-phosphoribosylamino)-pyrimidine + formate + 2 phosphate + 3 H(+). Its pathway is cofactor biosynthesis; riboflavin biosynthesis; 5-amino-6-(D-ribitylamino)uracil from GTP: step 1/4. Its function is as follows. Catalyzes the conversion of GTP to 2,5-diamino-6-ribosylamino-4(3H)-pyrimidinone 5'-phosphate (DARP), formate and pyrophosphate. This Buchnera aphidicola subsp. Acyrthosiphon pisum (strain APS) (Acyrthosiphon pisum symbiotic bacterium) protein is GTP cyclohydrolase-2.